A 327-amino-acid polypeptide reads, in one-letter code: GMP reductase (327 aa).

Cys-176 (thioimidate intermediate) is an active-site residue. Position 205-228 (205-228 (IIADGGIRTHGDIAKSIRFGASMV)) interacts with NADP(+).

It belongs to the IMPDH/GMPR family. GuaC type 2 subfamily.

The catalysed reaction is IMP + NH4(+) + NADP(+) = GMP + NADPH + 2 H(+). In terms of biological role, catalyzes the irreversible NADPH-dependent deamination of GMP to IMP. It functions in the conversion of nucleobase, nucleoside and nucleotide derivatives of G to A nucleotides, and in maintaining the intracellular balance of A and G nucleotides. The sequence is that of GMP reductase from Streptococcus pyogenes serotype M5 (strain Manfredo).